The primary structure comprises 215 residues: MOB kinase activator-like 1B (215 aa).

The disordered stretch occupies residues 1-29; that stretch reads MSLFGLGSRNQKTFRPKKSAPTGSKGAQL. Zn(2+) is bound by residues Cys80, Cys85, His162, and His167.

Belongs to the MOB1/phocein family. Constitutively expressed with higher expression in roots, flowers and pods than in leaves and stems.

It is found in the cytoplasm. The protein localises to the cytoskeleton. It localises to the phragmoplast. This is MOB kinase activator-like 1B from Medicago sativa subsp. falcata (Sickle medic).